Here is a 515-residue protein sequence, read N- to C-terminus: 2,3-bisphosphoglycerate-independent phosphoglycerate mutase (515 aa).

The Mn(2+) site is built by Asp14 and Ser64. Ser64 acts as the Phosphoserine intermediate in catalysis. Residues His125, Arg155–Asp156, Arg187, Arg193, Arg263–Arg266, and Lys337 contribute to the substrate site. Mn(2+) is bound by residues Asp404, His408, Asp445, His446, and His464.

It belongs to the BPG-independent phosphoglycerate mutase family. Monomer. The cofactor is Mn(2+).

The catalysed reaction is (2R)-2-phosphoglycerate = (2R)-3-phosphoglycerate. Its pathway is carbohydrate degradation; glycolysis; pyruvate from D-glyceraldehyde 3-phosphate: step 3/5. Catalyzes the interconversion of 2-phosphoglycerate and 3-phosphoglycerate. This Yersinia pestis bv. Antiqua (strain Antiqua) protein is 2,3-bisphosphoglycerate-independent phosphoglycerate mutase.